We begin with the raw amino-acid sequence, 332 residues long: MDPRSEVLLRQAELFQGPLLIAGAPADDLLGQLPQAQAWTWHAGDQAMLESRFAGRSHYGVEAPEAAFDSAVLFLPKSRELAAYLLNALASRLAGRELYLVGEKRGGIEGAAKQLQAFGKPRKLDSARHCQLWQVTIDQAPQAKPLESLAERFELALEDGPLQVVSLPGVFSHGRLDRGTALLLKHLDGLPGGHMLDFGCGAGVLGATLKRRYPQSRVTLLDVDAFAVAASRLTLAANGLEGEVISGDGIDAAPTELSLILSNPPFHTGVHTNYQASENLLKKSAVHLRKGGEMRLVANSFLRYQPLIEGALGNCQVRDEADGFRIYQATRG.

It belongs to the methyltransferase superfamily. RsmC family. Monomer.

It localises to the cytoplasm. It catalyses the reaction guanosine(1207) in 16S rRNA + S-adenosyl-L-methionine = N(2)-methylguanosine(1207) in 16S rRNA + S-adenosyl-L-homocysteine + H(+). In terms of biological role, specifically methylates the guanine in position 1207 of 16S rRNA in the 30S particle. The protein is Ribosomal RNA small subunit methyltransferase C of Pseudomonas putida (strain ATCC 47054 / DSM 6125 / CFBP 8728 / NCIMB 11950 / KT2440).